Consider the following 407-residue polypeptide: Methylthioribose kinase (407 aa).

Residues N40, K57, and 111-113 (EDL) contribute to the ATP site. D229 is a substrate binding site. 246–248 (DAE) serves as a coordination point for ATP. R344 contributes to the substrate binding site.

It belongs to the methylthioribose kinase family. Homodimer.

The catalysed reaction is 5-(methylsulfanyl)-D-ribose + ATP = 5-(methylsulfanyl)-alpha-D-ribose 1-phosphate + ADP + H(+). The protein operates within amino-acid biosynthesis; L-methionine biosynthesis via salvage pathway; S-methyl-5-thio-alpha-D-ribose 1-phosphate from S-methyl-5'-thioadenosine (hydrolase route): step 2/2. Its function is as follows. Catalyzes the phosphorylation of methylthioribose into methylthioribose-1-phosphate. This chain is Methylthioribose kinase, found in Yersinia pestis bv. Antiqua (strain Angola).